The chain runs to 310 residues: NAD-dependent protein deacylase sirtuin-5, mitochondrial (310 aa).

Residues 1 to 36 (MQPLQIAPCRLLYGLYRGLKSPASTGTRICPAMARP) constitute a mitochondrion transit peptide. One can recognise a Deacetylase sirtuin-type domain in the interval 37-307 (SSNMADFRKL…PEALAPHETG (271 aa)). Position 58-77 (58-77 (GAGVSAESGVPTFRGAGGYW)) interacts with NAD(+). Residues Tyr102 and Arg105 each coordinate substrate. 140 to 143 (QNID) provides a ligand contact to NAD(+). His158 functions as the Proton acceptor in the catalytic mechanism. The Zn(2+) site is built by Cys166, Cys169, Cys207, and Cys212. Residues 249–251 (GTS), 275–277 (NME), and Cys293 contribute to the NAD(+) site.

The protein belongs to the sirtuin family. Class III subfamily. In terms of assembly, monomer. Homodimer. Interacts with CPS1. Interacts with PCCA. Zn(2+) serves as cofactor.

The protein resides in the mitochondrion. It is found in the cytoplasm. The protein localises to the cytosol. Its subcellular location is the nucleus. The catalysed reaction is N(6)-malonyl-L-lysyl-[protein] + NAD(+) + H2O = 2''-O-malonyl-ADP-D-ribose + nicotinamide + L-lysyl-[protein]. It catalyses the reaction N(6)-succinyl-L-lysyl-[protein] + NAD(+) + H2O = 2''-O-succinyl-ADP-D-ribose + nicotinamide + L-lysyl-[protein]. It carries out the reaction N(6)-glutaryl-L-lysyl-[protein] + NAD(+) + H2O = 2''-O-glutaryl-ADP-D-ribose + nicotinamide + L-lysyl-[protein]. In terms of biological role, NAD-dependent lysine demalonylase, desuccinylase and deglutarylase that specifically removes malonyl, succinyl and glutaryl groups on target proteins. Activates CPS1 and contributes to the regulation of blood ammonia levels during prolonged fasting: acts by mediating desuccinylation and deglutarylation of CPS1, thereby increasing CPS1 activity in response to elevated NAD levels during fasting. Activates SOD1 by mediating its desuccinylation, leading to reduced reactive oxygen species. Activates SHMT2 by mediating its desuccinylation. Modulates ketogenesis through the desuccinylation and activation of HMGCS2. Has weak NAD-dependent protein deacetylase activity; however this activity may not be physiologically relevant in vivo. Can deacetylate cytochrome c (CYCS) and a number of other proteins in vitro such as UOX. This chain is NAD-dependent protein deacylase sirtuin-5, mitochondrial, found in Canis lupus familiaris (Dog).